Reading from the N-terminus, the 208-residue chain is Ribosomal RNA large subunit methyltransferase E (208 aa).

The S-adenosyl-L-methionine site is built by Gly-62, Trp-64, Asp-82, Asp-98, and Asp-123. Lys-163 (proton acceptor) is an active-site residue.

Belongs to the class I-like SAM-binding methyltransferase superfamily. RNA methyltransferase RlmE family.

Its subcellular location is the cytoplasm. It catalyses the reaction uridine(2552) in 23S rRNA + S-adenosyl-L-methionine = 2'-O-methyluridine(2552) in 23S rRNA + S-adenosyl-L-homocysteine + H(+). In terms of biological role, specifically methylates the uridine in position 2552 of 23S rRNA at the 2'-O position of the ribose in the fully assembled 50S ribosomal subunit. This chain is Ribosomal RNA large subunit methyltransferase E, found in Haemophilus ducreyi (strain 35000HP / ATCC 700724).